The chain runs to 156 residues: Probable histone H2A.6 (156 aa).

Disordered regions lie at residues 1 to 26 and 129 to 156; these read MDVG…KKPV and KKTA…QARS. Residues 9–26 are compositionally biased toward basic residues; that stretch reads AAKKAVGRKLGGPKKKPV. Residues 130–147 show a composition bias toward basic and acidic residues; it reads KTAEKADKPAKASKDKAA. The short motif at 149-152 is the SPKK motif element; that stretch reads SPKK.

Belongs to the histone H2A family. The nucleosome is a histone octamer containing two molecules each of H2A, H2B, H3 and H4 assembled in one H3-H4 heterotetramer and two H2A-H2B heterodimers. The octamer wraps approximately 147 bp of DNA.

It is found in the nucleus. The protein resides in the chromosome. In terms of biological role, core component of nucleosome. Nucleosomes wrap and compact DNA into chromatin, limiting DNA accessibility to the cellular machineries which require DNA as a template. Histones thereby play a central role in transcription regulation, DNA repair, DNA replication and chromosomal stability. DNA accessibility is regulated via a complex set of post-translational modifications of histones, also called histone code, and nucleosome remodeling. The sequence is that of Probable histone H2A.6 from Oryza sativa subsp. indica (Rice).